Reading from the N-terminus, the 455-residue chain is Exodeoxyribonuclease 7 large subunit (455 aa).

It belongs to the XseA family. As to quaternary structure, heterooligomer composed of large and small subunits.

The protein resides in the cytoplasm. The enzyme catalyses Exonucleolytic cleavage in either 5'- to 3'- or 3'- to 5'-direction to yield nucleoside 5'-phosphates.. Its function is as follows. Bidirectionally degrades single-stranded DNA into large acid-insoluble oligonucleotides, which are then degraded further into small acid-soluble oligonucleotides. The sequence is that of Exodeoxyribonuclease 7 large subunit from Lactobacillus acidophilus (strain ATCC 700396 / NCK56 / N2 / NCFM).